Here is a 291-residue protein sequence, read N- to C-terminus: Formamidopyrimidine-DNA glycosylase (291 aa).

The active-site Schiff-base intermediate with DNA is Pro2. Glu3 functions as the Proton donor in the catalytic mechanism. Lys58 serves as the catalytic Proton donor; for beta-elimination activity. 3 residues coordinate DNA: His104, Arg123, and Lys166. The FPG-type zinc finger occupies 257–291; the sequence is KVYDREGKPCPTCGGTVQRFVQNGRSTFWCPKCQK. Catalysis depends on Arg281, which acts as the Proton donor; for delta-elimination activity.

Belongs to the FPG family. In terms of assembly, monomer. Zn(2+) is required as a cofactor.

The catalysed reaction is Hydrolysis of DNA containing ring-opened 7-methylguanine residues, releasing 2,6-diamino-4-hydroxy-5-(N-methyl)formamidopyrimidine.. It catalyses the reaction 2'-deoxyribonucleotide-(2'-deoxyribose 5'-phosphate)-2'-deoxyribonucleotide-DNA = a 3'-end 2'-deoxyribonucleotide-(2,3-dehydro-2,3-deoxyribose 5'-phosphate)-DNA + a 5'-end 5'-phospho-2'-deoxyribonucleoside-DNA + H(+). Involved in base excision repair of DNA damaged by oxidation or by mutagenic agents. Acts as a DNA glycosylase that recognizes and removes damaged bases. Has a preference for oxidized purines, such as 7,8-dihydro-8-oxoguanine (8-oxoG). Has AP (apurinic/apyrimidinic) lyase activity and introduces nicks in the DNA strand. Cleaves the DNA backbone by beta-delta elimination to generate a single-strand break at the site of the removed base with both 3'- and 5'-phosphates. The protein is Formamidopyrimidine-DNA glycosylase of Rhodopseudomonas palustris (strain TIE-1).